We begin with the raw amino-acid sequence, 701 residues long: Meprin A subunit beta (701 aa).

The N-terminal stretch at 1 to 22 is a signal peptide; sequence MDLWNLSWFLFLDALLVISGLA. A propeptide spanning residues 23–61 is cleaved from the precursor; that stretch reads TPENFDVDGGMDQDIFDINEGLGLDLFEGDIRLDRAQIR. Residues 23-652 lie on the Extracellular side of the membrane; that stretch reads TPENFDVDGG…CEKRGSTRDT (630 aa). A Peptidase M12A domain is found at 62 to 256; that stretch reads NSIIGEKYRW…LKLNQLYNCS (195 aa). 3 disulfides stabilise this stretch: C103-C255, C124-C144, and C265-C427. H152 contributes to the Zn(2+) binding site. E153 is a catalytic residue. Residues H156 and H162 each contribute to the Zn(2+) site. N218, N254, N370, N421, N436, N445, N547, and N592 each carry an N-linked (GlcNAc...) asparagine glycan. In terms of domain architecture, MAM spans 260-429; sequence SFMDSCSFEL…INLSETRCPH (170 aa). An MATH domain is found at 430–585; that stretch reads HIWHIRNFTQ…GDDVYILLTV (156 aa). O-linked (GalNAc...) serine glycosylation is present at S593. 2 O-linked (GalNAc...) threonine glycosylation sites follow: T594 and T599. The segment at 595 to 607 is required for proteolytic processing; sequence QIQLTPAPSVQDL. A glycan (O-linked (GalNAc...) serine) is linked at S603. One can recognise an EGF-like domain in the interval 604-644; the sequence is VQDLCSKTTCKNDGVCTVRDGKAECRCQSGEDWWYMGERCE. Intrachain disulfides connect C608–C619, C613–C628, and C630–C643. The helical transmembrane segment at 653–673 threads the bilayer; sequence IVIAVSSTVAVFALMLIITLV. The Cytoplasmic segment spans residues 674–701; that stretch reads SVYCTRKKYRERMSSNRPNLTPQNQHAF. T694 carries the phosphothreonine modification.

As to quaternary structure, homotetramer consisting of disulfide-linked beta subunits, or heterotetramer of two alpha and two beta subunits formed by non-covalent association of two disulfide-linked heterodimers. Interacts with MBL2 through its carbohydrate moiety. This interaction may inhibit its catalytic activity. Interacts with TSPAN8. Zn(2+) serves as cofactor. Phosphorylated by PKC at multiple sites of its cytoplasmic part. Phosphorylation dcreases activity at the cell surface, leading to diminished substrate cleavage. In terms of processing, N-glycosylated; contains high mannose and/or complex biantennary structures. Post-translationally, O-glycosylation protect the C-terminal region from proteolytic cleavage and diminish secretion, this seems to be specific to human. Proteolytically activated by trypsin in the intestinal lumen and kallikrein-related peptidases in other tissues. The major site of expression is the brush border membrane of small intestinal and kidney epithelial cells.

It localises to the cell membrane. The protein localises to the secreted. The catalysed reaction is Hydrolysis of proteins, including azocasein, and peptides. Hydrolysis of 5-His-|-Leu-6, 6-Leu-|-Cys-7, 14-Ala-|-Leu-15 and 19-Cys-|-Gly-20 bonds in insulin B chain.. Its activity is regulated as follows. Strongly inhibited by fetuin-A/AHSG. Its function is as follows. Membrane metallopeptidase that sheds many membrane-bound proteins. Exhibits a strong preference for acidic amino acids at the P1' position. Known substrates include: FGF19, VGFA, IL1B, IL18, procollagen I and III, E-cadherin, KLK7, gastrin, ADAM10, tenascin-C. The presence of several pro-inflammatory cytokine among substrates implicate MEP1B in inflammation. It is also involved in tissue remodeling due to its capability to degrade extracellular matrix components. Also cleaves the amyloid precursor protein/APP, thereby releasing neurotoxic amyloid beta peptides. The sequence is that of Meprin A subunit beta (MEP1B) from Homo sapiens (Human).